The following is a 985-amino-acid chain: Alpha-glucosidase (985 aa).

A signal peptide spans 1-25 (MAGLKSFLASSWLLPVACGASQSIV). N-linked (GlcNAc...) asparagine glycans are attached at residues Asn126, Asn145, Asn220, Asn255, Asn349, and Asn424. Asp492 (nucleophile) is an active-site residue. Residue Glu495 is part of the active site. N-linked (GlcNAc...) asparagine glycans are attached at residues Asn508, Asn536, Asn539, Asn602, and Asn624. Asp660 (proton donor) is an active-site residue. Residues Asn661, Asn835, Asn881, Asn929, and Asn957 are each glycosylated (N-linked (GlcNAc...) asparagine).

This sequence belongs to the glycosyl hydrolase 31 family.

It carries out the reaction Hydrolysis of terminal, non-reducing (1-&gt;4)-linked alpha-D-glucose residues with release of alpha-D-glucose.. In terms of biological role, hydrolyzes malto-oligosaccharides, but has a low activity toward soluble starch. The chain is Alpha-glucosidase (agdA) from Aspergillus oryzae (strain ATCC 42149 / RIB 40) (Yellow koji mold).